The following is a 288-amino-acid chain: Phosphatidylserine decarboxylase proenzyme (288 aa).

Residues D90, H147, and S252 each act as charge relay system; for autoendoproteolytic cleavage activity in the active site. S252 acts as the Schiff-base intermediate with substrate; via pyruvic acid; for decarboxylase activity in catalysis. Pyruvic acid (Ser); by autocatalysis is present on S252.

Belongs to the phosphatidylserine decarboxylase family. PSD-B subfamily. Prokaryotic type I sub-subfamily. Heterodimer of a large membrane-associated beta subunit and a small pyruvoyl-containing alpha subunit. It depends on pyruvate as a cofactor. In terms of processing, is synthesized initially as an inactive proenzyme. Formation of the active enzyme involves a self-maturation process in which the active site pyruvoyl group is generated from an internal serine residue via an autocatalytic post-translational modification. Two non-identical subunits are generated from the proenzyme in this reaction, and the pyruvate is formed at the N-terminus of the alpha chain, which is derived from the carboxyl end of the proenzyme. The autoendoproteolytic cleavage occurs by a canonical serine protease mechanism, in which the side chain hydroxyl group of the serine supplies its oxygen atom to form the C-terminus of the beta chain, while the remainder of the serine residue undergoes an oxidative deamination to produce ammonia and the pyruvoyl prosthetic group on the alpha chain. During this reaction, the Ser that is part of the protease active site of the proenzyme becomes the pyruvoyl prosthetic group, which constitutes an essential element of the active site of the mature decarboxylase.

Its subcellular location is the cell membrane. The catalysed reaction is a 1,2-diacyl-sn-glycero-3-phospho-L-serine + H(+) = a 1,2-diacyl-sn-glycero-3-phosphoethanolamine + CO2. The protein operates within phospholipid metabolism; phosphatidylethanolamine biosynthesis; phosphatidylethanolamine from CDP-diacylglycerol: step 2/2. Catalyzes the formation of phosphatidylethanolamine (PtdEtn) from phosphatidylserine (PtdSer). This Pseudomonas fluorescens (strain ATCC BAA-477 / NRRL B-23932 / Pf-5) protein is Phosphatidylserine decarboxylase proenzyme.